The primary structure comprises 166 residues: NAD(P)H-quinone oxidoreductase subunit I, chloroplastic (166 aa).

4Fe-4S ferredoxin-type domains follow at residues 55–84 (GRIH…VDWK) and 95–124 (LNYS…MTEE). [4Fe-4S] cluster-binding residues include C64, C67, C70, C74, C104, C107, C110, and C114.

Belongs to the complex I 23 kDa subunit family. In terms of assembly, NDH is composed of at least 16 different subunits, 5 of which are encoded in the nucleus. [4Fe-4S] cluster is required as a cofactor.

It localises to the plastid. The protein localises to the chloroplast thylakoid membrane. The enzyme catalyses a plastoquinone + NADH + (n+1) H(+)(in) = a plastoquinol + NAD(+) + n H(+)(out). It carries out the reaction a plastoquinone + NADPH + (n+1) H(+)(in) = a plastoquinol + NADP(+) + n H(+)(out). Functionally, NDH shuttles electrons from NAD(P)H:plastoquinone, via FMN and iron-sulfur (Fe-S) centers, to quinones in the photosynthetic chain and possibly in a chloroplast respiratory chain. The immediate electron acceptor for the enzyme in this species is believed to be plastoquinone. Couples the redox reaction to proton translocation, and thus conserves the redox energy in a proton gradient. The sequence is that of NAD(P)H-quinone oxidoreductase subunit I, chloroplastic from Raillardella argentea (Silky raillardella).